A 98-amino-acid chain; its full sequence is Elicitin Vex1 (98 aa).

Cystine bridges form between C3/C71, C27/C56, and C51/C95. N-linked (GlcNAc...) asparagine glycosylation occurs at N92.

It belongs to the elicitin family.

Its subcellular location is the secreted. In terms of biological role, induces local and distal defense responses (incompatible hypersensitive reaction) in plants from the solanaceae and cruciferae families. Elicits leaf necrosis and causes the accumulation of pathogenesis-related proteins. Might interact with the lipidic molecules of the plasma membrane. The sequence is that of Elicitin Vex1 from Phytopythium vexans (Damping-off fungus).